The sequence spans 225 residues: MAEGETESPGPKKCGPYISSVTSQSVNLMIRGVVLFFIGVFLALVLNLLQIQRNVTLFPPDVIASIFSSAWWVPPCCGTASAVIGLLYPCIDRHLGEPHKFKREWSSVMRCVAVFVGINHASAKVDFDNNIQLSLTLAALSIGLWWTFDRSRSGFGLGVGIAFLATLVTQLLVYNGVYQYTSPDFLYVRSWLPCIFFAGGITMGNIGRQLAMYECKVIAEKSHQE.

The Cytoplasmic segment spans residues methionine 1–leucine 28. A helical transmembrane segment spans residues methionine 29–isoleucine 51. Residues glutamine 52–alanine 70 are Lumenal-facing. The helical transmembrane segment at tryptophan 71 to tyrosine 88 threads the bilayer. The Cytoplasmic portion of the chain corresponds to proline 89–arginine 103. Residues glutamate 104–aspartate 126 form a helical membrane-spanning segment. The Lumenal segment spans residues phenylalanine 127–asparagine 129. The chain crosses the membrane as a helical span at residues asparagine 130–phenylalanine 148. Residues aspartate 149–serine 153 lie on the Cytoplasmic side of the membrane. At serine 151 the chain carries Phosphoserine. The helical transmembrane segment at glycine 154 to asparagine 175 threads the bilayer. At glycine 176–arginine 189 the chain is on the lumenal side. Residues serine 190–glycine 207 traverse the membrane as a helical segment. The Cytoplasmic segment spans residues arginine 208–glutamate 225. Position 215 is a cysteine sulfenic acid (-SOH); alternate (cysteine 215). Cysteine 215 participates in a covalent cross-link: Glycyl cysteine thioester (Cys-Gly) (interchain with G-Cter in ubiquitin); alternate. The short motif at alanine 219 to glutamate 225 is the KxHxx element.

It belongs to the INSIG family. In terms of assembly, interacts with SCAP; interaction is direct and only takes place in the presence of sterols; it prevents interaction between SCAP and the coat protein complex II (COPII). Associates with the SCAP-SREBP complex (composed of SCAP and SREBF1/SREBP1 or SREBF2/SREBP2); association is mediated via its interaction with SCAP and only takes place in the presence of sterols. Interacts with RNF139. Interacts with RNF145. Phosphorylation at Ser-151 by PCK1 reduces binding to oxysterol, disrupting the interaction between INSIG2 and SCAP, thereby promoting nuclear translocation of SREBP proteins (SREBF1/SREBP1 or SREBF2/SREBP2) and subsequent transcription of downstream lipogenesis-related genes. Post-translationally, polyubiquitinated by AMFR/gp78 at Cys-215 in some tissues such as adipose tissues, undifferentiated myoblasts and liver, leading to its degradation. In differentiated myotubes, Cys-215 oxidation prevents ubiquitination at the same site, resulting in protein stabilization. In terms of processing, oxidized at Cys-215 in differentiated myotubes, preventing ubiquitination at the same site, and resulting in protein stabilization.

It is found in the endoplasmic reticulum membrane. Its function is as follows. Oxysterol-binding protein that mediates feedback control of cholesterol synthesis by controlling both endoplasmic reticulum to Golgi transport of SCAP and degradation of HMGCR. Acts as a negative regulator of cholesterol biosynthesis by mediating the retention of the SCAP-SREBP complex in the endoplasmic reticulum, thereby blocking the processing of sterol regulatory element-binding proteins (SREBPs) SREBF1/SREBP1 and SREBF2/SREBP2. Binds oxysterol, including 22-hydroxycholesterol, 24-hydroxycholesterol, 25-hydroxycholesterol and 27-hydroxycholesterol, regulating interaction with SCAP and retention of the SCAP-SREBP complex in the endoplasmic reticulum. In presence of oxysterol, interacts with SCAP, retaining the SCAP-SREBP complex in the endoplasmic reticulum, thereby preventing SCAP from escorting SREBF1/SREBP1 and SREBF2/SREBP2 to the Golgi. Sterol deprivation or phosphorylation by PCK1 reduce oxysterol-binding, disrupting the interaction between INSIG2 and SCAP, thereby promoting Golgi transport of the SCAP-SREBP complex, followed by processing and nuclear translocation of SREBF1/SREBP1 and SREBF2/SREBP2. Also regulates cholesterol synthesis by regulating degradation of HMGCR: initiates the sterol-mediated ubiquitin-mediated endoplasmic reticulum-associated degradation (ERAD) of HMGCR via recruitment of the reductase to the ubiquitin ligase RNF139. This chain is Insulin-induced gene 2 protein, found in Papio anubis (Olive baboon).